We begin with the raw amino-acid sequence, 851 residues long: Glycogen phosphorylase, liver form (851 aa).

Position 2 is an N-acetylalanine (Ala-2). Residue Ser-15 is modified to Phosphoserine; by PHK; in form phosphorylase a. Residues 43 to 45 (DRN), Tyr-76, and Arg-310 each bind AMP. Residue Lys-364 is modified to N6-succinyllysine. An N6-acetyllysine modification is found at Lys-470. Residues Ser-524, Ser-561, and Ser-639 each carry the phosphoserine modification. The residue at position 681 (Lys-681) is an N6-(pyridoxal phosphate)lysine. Lys-796 carries the post-translational modification N6-acetyllysine.

This sequence belongs to the glycogen phosphorylase family. In terms of assembly, homodimer; enzymatically active. Interacts with PPP1R3B; recruits the phosphatase PP1 which dephosphorylates and inactivates PYGL/glycogen phosphorylase. Pyridoxal 5'-phosphate is required as a cofactor. In terms of processing, acetylation, which is up-regulated by glucose and insulin and down-regulated by glucagon, inhibits the glycogen phosphorylase activity by promoting PPP1R3B-mediated recruitment of phosphatase PP1 and Ser-15 dephosphorylation. Post-translationally, phosphorylation at Ser-15 converts inactive phosphorylase b into active phosphorylase a. Dephosphorylation of Ser-15 by phosphatase PP1 inactivates the enzyme.

Its subcellular location is the cytoplasm. It localises to the cytosol. It carries out the reaction [(1-&gt;4)-alpha-D-glucosyl](n) + phosphate = [(1-&gt;4)-alpha-D-glucosyl](n-1) + alpha-D-glucose 1-phosphate. With respect to regulation, allosterically regulated through the non-covalent binding of metabolites, being activated by AMP and inhibited by ATP, ADP, and glucose-6-phosphate. The activity is also controlled by post-translational modifications including phosphorylation and acetylation. Allosteric enzyme that catalyzes the rate-limiting step in glycogen catabolism, the phosphorolytic cleavage of glycogen to produce glucose-1-phosphate, and plays a central role in maintaining cellular and organismal glucose homeostasis. This Bos taurus (Bovine) protein is Glycogen phosphorylase, liver form.